Here is a 318-residue protein sequence, read N- to C-terminus: MYNYLDFEKPVADLDGKILELKKIFQEKGSLDMSDEIARLEKRSQTALNDIYKKLTPWQKTQVARHPDRPHFMDYSKRLLSDVTPLAGDRKFAEDEAIQAGFARFKGEAVAYIGQEKGHDTQTRLRYNFGSARPEGYRKAVRIMEMADRFGLPLLTFIDTAGAYPGVSAEERGQAEAIAQSTAATLRLKVPVVSVVIGEGGSGGAIAIAAANKVYMLEHAIYSVISPEGAASILWRDPARAKDAAMNMRITAQDLYRLKIIDGIISEPLGGAHRGKEIAIDATGEIISEALKAMVGKDGEVLKQERREKYLQIGRSLA.

Positions 39-297 (RLEKRSQTAL…SEALKAMVGK (259 aa)) constitute a CoA carboxyltransferase C-terminal domain.

Belongs to the AccA family. In terms of assembly, acetyl-CoA carboxylase is a heterohexamer composed of biotin carboxyl carrier protein (AccB), biotin carboxylase (AccC) and two subunits each of ACCase subunit alpha (AccA) and ACCase subunit beta (AccD).

It is found in the cytoplasm. The catalysed reaction is N(6)-carboxybiotinyl-L-lysyl-[protein] + acetyl-CoA = N(6)-biotinyl-L-lysyl-[protein] + malonyl-CoA. It participates in lipid metabolism; malonyl-CoA biosynthesis; malonyl-CoA from acetyl-CoA: step 1/1. Component of the acetyl coenzyme A carboxylase (ACC) complex. First, biotin carboxylase catalyzes the carboxylation of biotin on its carrier protein (BCCP) and then the CO(2) group is transferred by the carboxyltransferase to acetyl-CoA to form malonyl-CoA. In Bartonella tribocorum (strain CIP 105476 / IBS 506), this protein is Acetyl-coenzyme A carboxylase carboxyl transferase subunit alpha.